Reading from the N-terminus, the 184-residue chain is Probable chemoreceptor glutamine deamidase CheD (184 aa).

This sequence belongs to the CheD family.

It carries out the reaction L-glutaminyl-[protein] + H2O = L-glutamyl-[protein] + NH4(+). In terms of biological role, probably deamidates glutamine residues to glutamate on methyl-accepting chemotaxis receptors (MCPs), playing an important role in chemotaxis. The chain is Probable chemoreceptor glutamine deamidase CheD from Rhizobium leguminosarum bv. trifolii (strain WSM2304).